The following is a 247-amino-acid chain: Probable transcriptional regulatory protein YPK_2146 (247 aa).

The protein belongs to the TACO1 family.

The protein localises to the cytoplasm. The polypeptide is Probable transcriptional regulatory protein YPK_2146 (Yersinia pseudotuberculosis serotype O:3 (strain YPIII)).